We begin with the raw amino-acid sequence, 444 residues long: Probable glycine dehydrogenase (decarboxylating) subunit 1 (444 aa).

This sequence belongs to the GcvP family. N-terminal subunit subfamily. The glycine cleavage system is composed of four proteins: P, T, L and H. In this organism, the P 'protein' is a heterodimer of two subunits.

It carries out the reaction N(6)-[(R)-lipoyl]-L-lysyl-[glycine-cleavage complex H protein] + glycine + H(+) = N(6)-[(R)-S(8)-aminomethyldihydrolipoyl]-L-lysyl-[glycine-cleavage complex H protein] + CO2. Functionally, the glycine cleavage system catalyzes the degradation of glycine. The P protein binds the alpha-amino group of glycine through its pyridoxal phosphate cofactor; CO(2) is released and the remaining methylamine moiety is then transferred to the lipoamide cofactor of the H protein. This Prosthecochloris aestuarii (strain DSM 271 / SK 413) protein is Probable glycine dehydrogenase (decarboxylating) subunit 1.